Consider the following 566-residue polypeptide: Putative ABC transporter ATP-binding protein BCE_2668 (566 aa).

2 ABC transporter domains span residues 5-246 (ISFE…GLRE) and 300-533 (LKVE…ANLK). ATP-binding positions include 39–46 (GRSGSGKS) and 333–340 (GHNGAGKS).

It belongs to the ABC transporter superfamily.

It is found in the cell membrane. In terms of biological role, probably part of an ABC transporter complex. Responsible for energy coupling to the transport system. This Bacillus cereus (strain ATCC 10987 / NRS 248) protein is Putative ABC transporter ATP-binding protein BCE_2668.